The primary structure comprises 272 residues: Cytochrome b-c1 complex subunit Rieske-1, mitochondrial (272 aa).

The transit peptide at 1 to 60 directs the protein to the mitochondrion; sequence MLRVAGRRLFSVSQRSSTATSFVVSRDHTLSDGGGDSSSAPRSLPSADLSSYHRSLIRGF. A disordered region spans residues 27–46; that stretch reads DHTLSDGGGDSSSAPRSLPS. Over 61–109 the chain is Mitochondrial matrix; it reads SSQVLAQGNEIGFGSEVPATVEAVKTPNSKIVYDDHNHERYPPGDPSKR. A helical transmembrane segment spans residues 110–132; that stretch reads AFAYFVLSGGRFVYASVLRLLVL. The Mitochondrial intermembrane portion of the chain corresponds to 133–272; sequence KLIVSMSASK…FLEENKLLIG (140 aa). The Rieske domain maps to 201–270; sequence VRVKNPEWLV…YSFLEENKLL (70 aa). Residues Cys215, His217, Cys234, and His237 each coordinate [2Fe-2S] cluster. Cys220 and Cys236 are oxidised to a cystine.

It belongs to the Rieske iron-sulfur protein family. As to quaternary structure, component of the ubiquinol-cytochrome c oxidoreductase (cytochrome b-c1 complex, complex III, CIII), a multisubunit enzyme composed of 10 subunits. The complex is composed of 3 respiratory subunits cytochrome b (MT-CYB), cytochrome c1 (CYC1-1 or CYC1-2) and Rieske protein (UCR1-1 or UCR1-2), 2 core protein subunits MPPalpha1 (or MPPalpha2) and MPPB, and 5 low-molecular weight protein subunits QCR7-1 (or QCR7-2), UCRQ-1 (or UCRQ-2), QCR9, UCRY and probably QCR6-1 (or QCR6-2). The complex exists as an obligatory dimer and forms supercomplexes (SCs) in the inner mitochondrial membrane with NADH-ubiquinone oxidoreductase (complex I, CI), resulting in different assemblies (supercomplexes SCI(1)III(2) and SCI(2)III(4)). Requires [2Fe-2S] cluster as cofactor.

The protein localises to the mitochondrion inner membrane. The catalysed reaction is a quinol + 2 Fe(III)-[cytochrome c](out) = a quinone + 2 Fe(II)-[cytochrome c](out) + 2 H(+)(out). In terms of biological role, component of the ubiquinol-cytochrome c oxidoreductase, a multisubunit transmembrane complex that is part of the mitochondrial electron transport chain which drives oxidative phosphorylation. The respiratory chain contains 3 multisubunit complexes succinate dehydrogenase (complex II, CII), ubiquinol-cytochrome c oxidoreductase (cytochrome b-c1 complex, complex III, CIII) and cytochrome c oxidase (complex IV, CIV), that cooperate to transfer electrons derived from NADH and succinate to molecular oxygen, creating an electrochemical gradient over the inner membrane that drives transmembrane transport and the ATP synthase. The cytochrome b-c1 complex catalyzes electron transfer from ubiquinol to cytochrome c, linking this redox reaction to translocation of protons across the mitochondrial inner membrane, with protons being carried across the membrane as hydrogens on the quinol. In the process called Q cycle, 2 protons are consumed from the matrix, 4 protons are released into the intermembrane space and 2 electrons are passed to cytochrome c. The Rieske protein is a catalytic core subunit containing a [2Fe-2S] iron-sulfur cluster. It cycles between 2 conformational states during catalysis to transfer electrons from the quinol bound in the Q(0) site in cytochrome b to cytochrome c1. This Arabidopsis thaliana (Mouse-ear cress) protein is Cytochrome b-c1 complex subunit Rieske-1, mitochondrial.